The sequence spans 60 residues: Putative transmembrane protein 74 (60 aa).

The next 2 membrane-spanning stretches (helical) occupy residues 4–24 (FSVI…FLTF) and 35–55 (WVYI…YQAG).

Its subcellular location is the host membrane. This chain is Putative transmembrane protein 74 (SIFV0074), found in Sulfolobus islandicus filamentous virus (isolate Iceland/Hveragerdi) (SIFV).